The primary structure comprises 358 residues: Phospho-N-acetylmuramoyl-pentapeptide-transferase (358 aa).

10 helical membrane passes run phenylalanine 24–valine 44, threonine 73–leucine 93, asparagine 95–aspartate 115, methionine 134–phenylalanine 154, glutamate 169–valine 189, glycine 197–alanine 217, glycine 233–tryptophan 253, valine 261–leucine 281, isoleucine 286–valine 306, and lysine 335–leucine 355.

Belongs to the glycosyltransferase 4 family. MraY subfamily. Requires Mg(2+) as cofactor.

The protein localises to the cell inner membrane. It catalyses the reaction UDP-N-acetyl-alpha-D-muramoyl-L-alanyl-gamma-D-glutamyl-meso-2,6-diaminopimeloyl-D-alanyl-D-alanine + di-trans,octa-cis-undecaprenyl phosphate = di-trans,octa-cis-undecaprenyl diphospho-N-acetyl-alpha-D-muramoyl-L-alanyl-D-glutamyl-meso-2,6-diaminopimeloyl-D-alanyl-D-alanine + UMP. Its pathway is cell wall biogenesis; peptidoglycan biosynthesis. Functionally, catalyzes the initial step of the lipid cycle reactions in the biosynthesis of the cell wall peptidoglycan: transfers peptidoglycan precursor phospho-MurNAc-pentapeptide from UDP-MurNAc-pentapeptide onto the lipid carrier undecaprenyl phosphate, yielding undecaprenyl-pyrophosphoryl-MurNAc-pentapeptide, known as lipid I. The chain is Phospho-N-acetylmuramoyl-pentapeptide-transferase from Citrifermentans bemidjiense (strain ATCC BAA-1014 / DSM 16622 / JCM 12645 / Bem) (Geobacter bemidjiensis).